We begin with the raw amino-acid sequence, 336 residues long: Palmitoyltransferase SWF1 (336 aa).

Topologically, residues 1–2 (MS) are lumenal. Residues 3–23 (WNLLFVLLIGFVVLILLSPVF) traverse the membrane as a helical segment. Residues 24–50 (KSTWPFSTFYRNVFQPFLVDDQKYRWK) lie on the Cytoplasmic side of the membrane. The helical transmembrane segment at 51 to 71 (LHLVPLFYTSIYLYLVYTYHM) threads the bilayer. Residues 72–86 (RVESTIKNELFLLER) lie on the Lumenal side of the membrane. Residues 87–107 (ILIVPIIILPPVALGILAMVS) form a helical membrane-spanning segment. Residues 108–179 (RAEDSKDHKS…CIGKGNYLQF (72 aa)) lie on the Cytoplasmic side of the membrane. Residues 134–184 (IKCSTCRIVKPARSKHCSICNRCVLVADHHCIWINNCIGKGNYLQFYLFLI) form the DHHC domain. A helical transmembrane segment spans residues 180 to 200 (YLFLISNIFSMCYAFLRLWYI). Over 201 to 216 (SLNSTSTLPRAVLTLT) the chain is Lumenal. Residues 217-237 (ILCGCFTIICAIFTYLQLAIV) traverse the membrane as a helical segment. Topologically, residues 238 to 336 (KEGMTTNEQD…TFLANLTDLI (99 aa)) are cytoplasmic.

This sequence belongs to the DHHC palmitoyltransferase family. SWF1 subfamily.

It is found in the endoplasmic reticulum membrane. It catalyses the reaction L-cysteinyl-[protein] + hexadecanoyl-CoA = S-hexadecanoyl-L-cysteinyl-[protein] + CoA. Its function is as follows. Palmitoyltransferase that targets several endosomal SNAREs. Palmitoylates the SNAREs SNC1, SNC2, SYN8 and TLG1, at cysteine residues close to the cytoplasmic end of their transmembrane domain. May have a role in the cellular quality control of transmembrane domain-containing proteins. The sequence is that of Palmitoyltransferase SWF1 (SWF1) from Saccharomyces cerevisiae (strain ATCC 204508 / S288c) (Baker's yeast).